A 61-amino-acid chain; its full sequence is MRWSKWFNVFCIVALGSIYGYKLFTNQEVSTTRLIIASVIVLWNIVGLFSKESVKQAQQAN.

Helical transmembrane passes span 7-24 (FNVFCIVALGSIYGYKLF) and 29-48 (VSTTRLIIASVIVLWNIVGL).

It localises to the cell membrane. This is an uncharacterized protein from Bacillus subtilis (strain 168).